A 201-amino-acid chain; its full sequence is Coat protein (201 aa).

Belongs to the potexvirus capsid protein family.

Its subcellular location is the virion. Functionally, required for genome encapsidation. Forms ribonucleoprotein complexes along with TGB1 helicase and viral RNA. The sequence is that of Coat protein from Lilium formosanum.